Here is a 67-residue protein sequence, read N- to C-terminus: Pepsin B (67 aa).

Positions 1 to 43 (MERIILRKGKSIREAMEEQGVLEKFLKNRPKIDPAAKYHFNND) are cleaved as a propeptide — activation peptide.

This sequence belongs to the peptidase A1 family.

Its subcellular location is the secreted. The catalysed reaction is Degradation of gelatin, little activity on hemoglobin. Specificity on B chain of insulin more restricted than that of pepsin A. Does not cleave 1-Phe-|-Val-2, 4-Gln-|-His-5 or 23-Gly-|-Phe-24.. The polypeptide is Pepsin B (PGB) (Sus scrofa (Pig)).